The sequence spans 451 residues: MPPAGDDESPAATGDGYSKKVLQGRYELGRVLGQGASSKVYRARDARTGAHVAVKAIRKQQQPHHHPSCRSPEAAAAARRCVEVEREVAALRRVRGHPHVVALLDVLATRSTVYLVLELASGGSVLSALDSRGGGHYDEPAARRLFAQLASAVAHAHSLGVFHRDIKPENLLLDERGDLRLTDFGLSAFADADQHLGATDGLAATHCGSPAYVAPEILLKRRYDASKADVWSCGVVLFVLTAGYLPFNDGNLMAMYRKICAAKFRCPKWCSQELRSLIGRMLDPEPDTRIKIGEIFDHPWLQQDGSSSSFGMIQAASSHSKPEVEKWEAELEQAMELNAFDIIGFASGCDLSGLIGPLPDRVRFVLPGGDSKSVLDKVEKLGREEGLVVRRKEEEWCGGVHVEATSGKFTAYVRVNLLPKKILMIEAERVIGSEIPKFWHQLQIGNLLVRK.

Residues 26 to 301 enclose the Protein kinase domain; it reads YELGRVLGQG…IGEIFDHPWL (276 aa). ATP is bound by residues 32–40 and K55; that span reads LGQGASSKV. D165 acts as the Proton acceptor in catalysis. The interval 183-216 is activation loop; that stretch reads DFGLSAFADADQHLGATDGLAATHCGSPAYVAPE. Residues 330 to 356 enclose the NAF domain; the sequence is ELEQAMELNAFDIIGFASGCDLSGLIG. A PPI region spans residues 361–389; that stretch reads RVRFVLPGGDSKSVLDKVEKLGREEGLVV.

The protein belongs to the protein kinase superfamily. CAMK Ser/Thr protein kinase family. SNF1 subfamily. Mn(2+) serves as cofactor.

It catalyses the reaction L-seryl-[protein] + ATP = O-phospho-L-seryl-[protein] + ADP + H(+). It carries out the reaction L-threonyl-[protein] + ATP = O-phospho-L-threonyl-[protein] + ADP + H(+). In terms of biological role, CIPK serine-threonine protein kinases interact with CBL proteins. Binding of a CBL protein to the regulatory NAF domain of CIPK protein lead to the activation of the kinase in a calcium-dependent manner. The sequence is that of CBL-interacting protein kinase 22 (CIPK22) from Oryza sativa subsp. japonica (Rice).